We begin with the raw amino-acid sequence, 754 residues long: Gelsolin, cytoplasmic (754 aa).

The interval 1-120 (MVPAFEGAGA…RYLKGGVASG (120 aa)) is actin-severing. Residues 22 to 71 (FEVVPYPKEKYGQFYQGDSYIVLYTRDVNGNLSWDLHFWLGSETSQDEAG) form a Gelsolin-like 1 repeat. The interval 68-71 (DEAG) is actin-actin interfilament contact point. A 1,2-diacyl-sn-glycero-3-phospho-(1D-myo-inositol-4,5-bisphosphate) contacts are provided by residues 101-108 (LFLSRFKK) and 133-141 (RLFHVKGRR). The Gelsolin-like 2 repeat unit spans residues 143 to 183 (IRIRQVEVGVGSMNKGDCFILDCGSQVYAYMGPSSRKMDRL). Residues 209–238 (TASGSEAGESSPGLGGGSPDDVADEDTGVD) form a disordered region. Over residues 210-220 (ASGSEAGESSP) the composition is skewed to low complexity. Gelsolin-like repeat units lie at residues 266-306 (NMIG…KEKV), 414-463 (LKLE…DEKA), 538-580 (FDTR…EEKA), and 643-684 (LRVN…QEKE). The tract at residues 386–751 (LLQKNAGPAF…MKAQVPETNA (366 aa)) is actin-binding, Ca-sensitive. 8 residues coordinate Ca(2+): glycine 430, aspartate 431, glutamate 461, aspartate 556, glutamate 578, aspartate 659, aspartate 660, and glutamate 682.

It belongs to the villin/gelsolin family. In terms of tissue distribution, tail muscle.

The protein resides in the cytoplasm. Its subcellular location is the cytoskeleton. Its function is as follows. Calcium-regulated, actin-modulating protein that binds to the plus (or barbed) ends of actin monomers or filaments, preventing monomer exchange (end-blocking or capping). It can promote the assembly of monomers into filaments (nucleation) as well as sever filaments already formed. The sequence is that of Gelsolin, cytoplasmic from Homarus americanus (American lobster).